The sequence spans 236 residues: Virion protein US10 homolog (236 aa).

A disordered region spans residues 1–32 (MDGAYGHVHNGSPMAVDGEESGAGTGTGAGAD). The span at 21–31 (SGAGTGTGAGA) shows a compositional bias: gly residues. The segment at 138-150 (CAYWCCLGHAFAC) is a zinc-finger region.

Belongs to the herpesviridae US10 family. In terms of processing, phosphorylated.

It localises to the virion tegument. Its subcellular location is the host nucleus matrix. The protein is Virion protein US10 homolog of Equine herpesvirus 1 (strain Ab4p) (EHV-1).